Reading from the N-terminus, the 120-residue chain is Small ribosomal subunit protein uS12 (120 aa).

Aspartate 88 carries the 3-methylthioaspartic acid modification.

Belongs to the universal ribosomal protein uS12 family. Part of the 30S ribosomal subunit. Contacts proteins S8 and S17. May interact with IF1 in the 30S initiation complex.

Its function is as follows. With S4 and S5 plays an important role in translational accuracy. Interacts with and stabilizes bases of the 16S rRNA that are involved in tRNA selection in the A site and with the mRNA backbone. Located at the interface of the 30S and 50S subunits, it traverses the body of the 30S subunit contacting proteins on the other side and probably holding the rRNA structure together. The combined cluster of proteins S8, S12 and S17 appears to hold together the shoulder and platform of the 30S subunit. The sequence is that of Small ribosomal subunit protein uS12 from Carsonella ruddii (strain PV).